Here is a 1112-residue protein sequence, read N- to C-terminus: DNA-directed RNA polymerase subunit beta (1112 aa).

Positions 1087-1112 (VGGRRTPNRPTYENIGGPREMEFSED) are disordered.

This sequence belongs to the RNA polymerase beta chain family. In cyanobacteria the RNAP catalytic core is composed of 2 alpha, 1 beta, 1 beta', 1 gamma and 1 omega subunit. When a sigma factor is associated with the core the holoenzyme is formed, which can initiate transcription.

It carries out the reaction RNA(n) + a ribonucleoside 5'-triphosphate = RNA(n+1) + diphosphate. Its function is as follows. DNA-dependent RNA polymerase catalyzes the transcription of DNA into RNA using the four ribonucleoside triphosphates as substrates. This chain is DNA-directed RNA polymerase subunit beta, found in Gloeobacter violaceus (strain ATCC 29082 / PCC 7421).